Here is a 379-residue protein sequence, read N- to C-terminus: Alcohol dehydrogenase 1 (379 aa).

Residues Cys-47, Thr-49, His-69, Cys-99, Cys-102, Cys-105, Cys-113, and Cys-177 each contribute to the Zn(2+) site. Residues Thr-49 and His-69 each contribute to the an alcohol site. Thr-49 contacts NAD(+). NAD(+) is bound by residues 202–207 (GLGAVG), Asp-226, Arg-231, Thr-272, Val-295, 295–297 (VGV), Phe-322, and Arg-372.

Belongs to the zinc-containing alcohol dehydrogenase family. As to quaternary structure, homodimer. Requires Zn(2+) as cofactor.

The protein resides in the cytoplasm. The enzyme catalyses a primary alcohol + NAD(+) = an aldehyde + NADH + H(+). It carries out the reaction a secondary alcohol + NAD(+) = a ketone + NADH + H(+). The polypeptide is Alcohol dehydrogenase 1 (ADH1) (Cenchrus americanus (Pearl millet)).